Here is a 499-residue protein sequence, read N- to C-terminus: uncharacterized protein (499 aa).

12 helical membrane passes run 51-71 (LLFR…LVAF), 98-118 (IIAS…TLLM), 127-147 (LAFI…CHNF), 155-175 (LVLG…LTMI), 187-207 (YLFA…YAVL), 220-240 (WLFI…YFII), 301-321 (CLYG…YTSL), 325-345 (YMTI…SFLS), 352-372 (GIIL…LLAC), 378-398 (VLYF…GLNV), 412-432 (ATAI…AGQI), and 444-464 (LTSL…IFFL).

Belongs to the major facilitator superfamily. Allantoate permease family.

It localises to the golgi apparatus. Its subcellular location is the membrane. This is an uncharacterized protein from Schizosaccharomyces pombe (strain 972 / ATCC 24843) (Fission yeast).